A 385-amino-acid chain; its full sequence is uncharacterized protein (385 aa).

3 residues coordinate Zn(2+): Asp180, His258, and His275.

The protein belongs to the iron-containing alcohol dehydrogenase family. It depends on Zn(2+) as a cofactor.

This is an uncharacterized protein from Synechocystis sp. (strain ATCC 27184 / PCC 6803 / Kazusa).